The following is a 243-amino-acid chain: 3-deoxy-manno-octulosonate cytidylyltransferase (243 aa).

Belongs to the KdsB family.

It is found in the cytoplasm. It carries out the reaction 3-deoxy-alpha-D-manno-oct-2-ulosonate + CTP = CMP-3-deoxy-beta-D-manno-octulosonate + diphosphate. It functions in the pathway nucleotide-sugar biosynthesis; CMP-3-deoxy-D-manno-octulosonate biosynthesis; CMP-3-deoxy-D-manno-octulosonate from 3-deoxy-D-manno-octulosonate and CTP: step 1/1. The protein operates within bacterial outer membrane biogenesis; lipopolysaccharide biosynthesis. Activates KDO (a required 8-carbon sugar) for incorporation into bacterial lipopolysaccharide in Gram-negative bacteria. This is 3-deoxy-manno-octulosonate cytidylyltransferase from Helicobacter pylori (strain G27).